A 284-amino-acid chain; its full sequence is Bifunctional protein FolD (284 aa).

NADP(+) contacts are provided by residues 164–166 and S189; that span reads GRS.

Belongs to the tetrahydrofolate dehydrogenase/cyclohydrolase family. As to quaternary structure, homodimer.

The catalysed reaction is (6R)-5,10-methylene-5,6,7,8-tetrahydrofolate + NADP(+) = (6R)-5,10-methenyltetrahydrofolate + NADPH. It catalyses the reaction (6R)-5,10-methenyltetrahydrofolate + H2O = (6R)-10-formyltetrahydrofolate + H(+). The protein operates within one-carbon metabolism; tetrahydrofolate interconversion. In terms of biological role, catalyzes the oxidation of 5,10-methylenetetrahydrofolate to 5,10-methenyltetrahydrofolate and then the hydrolysis of 5,10-methenyltetrahydrofolate to 10-formyltetrahydrofolate. The polypeptide is Bifunctional protein FolD (Listeria welshimeri serovar 6b (strain ATCC 35897 / DSM 20650 / CCUG 15529 / CIP 8149 / NCTC 11857 / SLCC 5334 / V8)).